The chain runs to 431 residues: Protein farnesyltransferase subunit beta (431 aa).

5 PFTB repeats span residues 130–171 (KRKI…SLCD), 182–224 (RKGI…TLLN), 231–273 (TEGV…AILR), 280–322 (VEKL…AILE), and 332–375 (KHAL…AVAE). (2E,6E)-farnesyl diphosphate is bound by residues 258 to 261 (HGGY) and 301 to 304 (RSNK). Positions 307 and 309 each coordinate Zn(2+). Residue 310 to 313 (YSFW) participates in (2E,6E)-farnesyl diphosphate binding. His363 contributes to the Zn(2+) binding site.

Belongs to the protein prenyltransferase subunit beta family. As to quaternary structure, heterodimer of an alpha (RAM2) and a beta (RAM1) subunit. It depends on Zn(2+) as a cofactor.

It localises to the cytoplasm. It carries out the reaction L-cysteinyl-[protein] + (2E,6E)-farnesyl diphosphate = S-(2E,6E)-farnesyl-L-cysteinyl-[protein] + diphosphate. Catalyzes the transfer of a farnesyl moiety from farnesyl diphosphate to a cysteine at the fourth position from the C-terminus of several proteins having the C-terminal sequence Cys-aliphatic-aliphatic-X where X is Ser, Ala, Met, Cys, or Gln. Required for the membrane localization of proteins such as a-factor, Ras proteins and other membrane proteins containing the C-terminal CAAX motif. The beta subunit is responsible for isoprenoid and peptide-binding. The protein is Protein farnesyltransferase subunit beta of Saccharomyces cerevisiae (strain ATCC 204508 / S288c) (Baker's yeast).